The sequence spans 436 residues: Glutamate-1-semialdehyde 2,1-aminomutase 2 (436 aa).

K271 bears the N6-(pyridoxal phosphate)lysine mark.

Belongs to the class-III pyridoxal-phosphate-dependent aminotransferase family. HemL subfamily. As to quaternary structure, homodimer. It depends on pyridoxal 5'-phosphate as a cofactor.

The protein resides in the cytoplasm. The catalysed reaction is (S)-4-amino-5-oxopentanoate = 5-aminolevulinate. It participates in porphyrin-containing compound metabolism; protoporphyrin-IX biosynthesis; 5-aminolevulinate from L-glutamyl-tRNA(Glu): step 2/2. This is Glutamate-1-semialdehyde 2,1-aminomutase 2 from Exiguobacterium sibiricum (strain DSM 17290 / CCUG 55495 / CIP 109462 / JCM 13490 / 255-15).